Reading from the N-terminus, the 598-residue chain is Mitochondrial distribution and morphology protein 30 (598 aa).

Residues Ser-13–Arg-59 form the F-box domain.

In terms of assembly, interacts with SKP1. Component of the probable SCF(MDM30) complex containing CDC53, SKP1, RBX1 and MDM30. Interacts with SKP1 and FZO1.

Its subcellular location is the cytoplasm. It is found in the mitochondrion. It functions in the pathway protein modification; protein ubiquitination. Functionally, substrate recognition component of a SCF (SKP1-CUL1-F-box protein) E3 ubiquitin-protein ligase complex which mediates the ubiquitination and subsequent proteasomal degradation of target proteins. Probably recognizes and binds to phosphorylated target proteins. Recognizes FZO1 and regulates the amount of FZO1. Regulatory factor for the mitochondrial fusion machinery. Required for mitochondrial DNA maintenance. This Saccharomyces cerevisiae (strain ATCC 204508 / S288c) (Baker's yeast) protein is Mitochondrial distribution and morphology protein 30 (MDM30).